Consider the following 355-residue polypeptide: MEPCEDKCKRGLSLNFFEEDGPSLRLNSDSLDFLARDFKVEGMSQDNFDQKTKLYITEESLQKEVNIFLTKIYIRESEREPPQSHNSVFQLLSKIRNSVPNVSAFRNNLSILSKELSFFSFARHIHNRRLCWAEFIYCIRRGIKAIFKTTVQFLPTRLAKIFEKKASEVLKDNLLQTCNSKREGEVCDVKEPAVASSESSDCFNDMQELNNIVDLRDYSNSRFQQNRLLDRNLKGWIQGESEKALKGRRTTKRNDKENYNYPDFSNDNELLFSLATLIVENNPKKENIIPKYYLRYLQRLSRTEINKEIIEIEKLELEVVQFQMSIANLINTQVEVTNTIEELGLRCRPLPNENE.

Residues 298 to 338 (QRLSRTEINKEIIEIEKLELEVVQFQMSIANLINTQVEVTN) are a coiled coil.

Its subcellular location is the cytoplasm. Its function is as follows. Has a role in meiosis. This chain is Meiotic coiled-coil protein 4 (mcp4), found in Schizosaccharomyces pombe (strain 972 / ATCC 24843) (Fission yeast).